Consider the following 353-residue polypeptide: Vomeronasal type-1 receptor 1 (353 aa).

Topologically, residues 1-56 are extracellular; sequence MVGDTLKLLSPLMTRYFFLLFYSTDSSDLNENQHPLDFDEMAFGKVKSGISFLIQT. A helical transmembrane segment spans residues 57 to 77; that stretch reads GVGILGNSFLLCFYNLILFTG. Residues 78-84 lie on the Cytoplasmic side of the membrane; sequence HKLRPTD. Residues 85-105 traverse the membrane as a helical segment; sequence LILSQLALANSMVLFFKGIPQ. At 106-132 the chain is on the extracellular side; the sequence is TMAAFGLKYLLNDTGCKFVFYYHRVGT. The N-linked (GlcNAc...) asparagine glycan is linked to asparagine 117. Residues 133–153 form a helical membrane-spanning segment; it reads RVSLSTICLLNGFQAIKLNPS. At 154–169 the chain is on the cytoplasmic side; sequence ICRWMEIKIRSPRFID. The helical transmembrane segment at 170 to 190 threads the bilayer; that stretch reads FCCLLCWAPHVLMNASVLLLV. Residues 191–226 lie on the Extracellular side of the membrane; sequence NGPLNSKNSSAKNNYGYCSYKASKRFSSLHAVLYFS. An N-linked (GlcNAc...) asparagine glycan is attached at asparagine 198. The chain crosses the membrane as a helical span at residues 227–247; the sequence is PDFMSLGFMVWASGSMVFFLY. Topologically, residues 248–274 are cytoplasmic; that stretch reads RHKQQVQHNHSNRLSCRPSQEARATHT. The helical transmembrane segment at 275–295 threads the bilayer; sequence IMVLVSSFFVFYSVHSFLTIW. Over 296–303 the chain is Extracellular; it reads TTVVANPG. A helical membrane pass occupies residues 304–324; the sequence is QWIVTNSVLVASCFPARSPFV. The Cytoplasmic segment spans residues 325-353; that stretch reads LIMSDTHISQFCFACRTRKTLFPNLVVMP.

It belongs to the G-protein coupled receptor 1 family. In terms of tissue distribution, expressed in the olfactory mucosa, very low expression in brain, lung and kidney.

It is found in the cell membrane. Functionally, putative pheromone receptor. The protein is Vomeronasal type-1 receptor 1 (VN1R1) of Homo sapiens (Human).